The sequence spans 543 residues: T-complex protein 1 subunit eta (543 aa).

M1 carries the post-translational modification N-acetylmethionine. Residue G41 participates in ADP binding. Residue G41 participates in ATP binding. Position 67 is an N6-acetyllysine (K67). Residue D92 participates in Mg(2+) binding. Residues G93, T94, T95, S96, S164, and S165 each contribute to the ADP site. Residue G93 coordinates ATP. S96 contacts ATP. Residues K250 and K320 each carry the N6-acetyllysine modification. Residues R398 and G409 each coordinate ATP. G409 contacts ADP. K430 participates in a covalent cross-link: Glycyl lysine isopeptide (Lys-Gly) (interchain with G-Cter in SUMO2). Positions 494 and 499 each coordinate ADP. R499 serves as a coordination point for ATP. The residue at position 535 (R535) is an Omega-N-methylarginine.

This sequence belongs to the TCP-1 chaperonin family. Component of the chaperonin-containing T-complex (TRiC), a hexadecamer composed of two identical back-to-back stacked rings enclosing a protein folding chamber. Each ring is made up of eight different subunits: TCP1/CCT1, CCT2, CCT3, CCT4, CCT5, CCT6A/CCT6, CCT7, CCT8. Interacts with PACRG. Interacts with DLEC1.

It localises to the cytoplasm. The enzyme catalyses ATP + H2O = ADP + phosphate + H(+). Component of the chaperonin-containing T-complex (TRiC), a molecular chaperone complex that assists the folding of actin, tubulin and other proteins upon ATP hydrolysis. The TRiC complex mediates the folding of WRAP53/TCAB1, thereby regulating telomere maintenance. The protein is T-complex protein 1 subunit eta (CCT7) of Pongo abelii (Sumatran orangutan).